Reading from the N-terminus, the 717-residue chain is Protein Teyrha-meyrha (717 aa).

The span at 140–152 shows a compositional bias: polar residues; that stretch reads FRTDSASPTCTSH. 6 disordered regions span residues 140-214, 229-270, 440-498, 511-539, 563-594, and 624-717; these read FRTD…SNPA, HLAA…APPV, KIPP…QPGK, SQKD…GEAP, DSCG…MDTA, and QRRQ…DTKA. Low complexity predominate over residues 195–214; that stretch reads ATSSSASSSSSSSCSTSNPA. The segment covering 235–263 has biased composition (basic residues); the sequence is PHHHPHTHAHSHPHPLAHPHAHSHHHVGH. The span at 442-451 shows a compositional bias: basic and acidic residues; the sequence is PPEDDAKSQE. Over residues 452 to 466 the composition is skewed to acidic residues; sequence EIETVDVESCNDEVP. The span at 471–482 shows a compositional bias: polar residues; sequence ELATPSSGSSGT. Residues 513–522 are compositionally biased toward basic and acidic residues; it reads KDPHPDEHDV. Low complexity-rich tracts occupy residues 523–533 and 570–580; these read STNVTTASSSS and NDTNSSSSTHN. Positions 630-640 are enriched in polar residues; that stretch reads QNVGSSRSLEN. The segment covering 667–686 has biased composition (low complexity); sequence NNNNNNNNNNNNSNSNNNNN. Residues 687–704 show a composition bias toward polar residues; that stretch reads PSTKYAESMENSLSQLSS.

In terms of tissue distribution, in embryos, expressed specifically in M12 (at protein level).

It is found in the nucleus. Functionally, required for the correct synaptic targeting of motoneurons RP5 and V to muscle 12 (M12). May be involved in the negative regulation of Tl in M12. Involved in the correct patterning of veins in the proximal (costal) region of the wing blade. The polypeptide is Protein Teyrha-meyrha (Drosophila melanogaster (Fruit fly)).